Consider the following 413-residue polypeptide: Serine hydroxymethyltransferase (413 aa).

(6S)-5,6,7,8-tetrahydrofolate contacts are provided by residues leucine 117 and 121 to 123 (GHL). Lysine 226 carries the post-translational modification N6-(pyridoxal phosphate)lysine. Residues glutamate 239 and 349-351 (SPF) each bind (6S)-5,6,7,8-tetrahydrofolate.

Belongs to the SHMT family. Homodimer. Pyridoxal 5'-phosphate is required as a cofactor.

The protein resides in the cytoplasm. It catalyses the reaction (6R)-5,10-methylene-5,6,7,8-tetrahydrofolate + glycine + H2O = (6S)-5,6,7,8-tetrahydrofolate + L-serine. It functions in the pathway one-carbon metabolism; tetrahydrofolate interconversion. The protein operates within amino-acid biosynthesis; glycine biosynthesis; glycine from L-serine: step 1/1. In terms of biological role, catalyzes the reversible interconversion of serine and glycine with tetrahydrofolate (THF) serving as the one-carbon carrier. This reaction serves as the major source of one-carbon groups required for the biosynthesis of purines, thymidylate, methionine, and other important biomolecules. Also exhibits THF-independent aldolase activity toward beta-hydroxyamino acids, producing glycine and aldehydes, via a retro-aldol mechanism. This chain is Serine hydroxymethyltransferase, found in Bacillus cytotoxicus (strain DSM 22905 / CIP 110041 / 391-98 / NVH 391-98).